A 296-amino-acid polypeptide reads, in one-letter code: Acetylglutamate kinase (296 aa).

Residues 67–68, Arg-89, and Asn-194 contribute to the substrate site; that span reads GG.

It belongs to the acetylglutamate kinase family. ArgB subfamily.

It localises to the cytoplasm. The catalysed reaction is N-acetyl-L-glutamate + ATP = N-acetyl-L-glutamyl 5-phosphate + ADP. The protein operates within amino-acid biosynthesis; L-arginine biosynthesis; N(2)-acetyl-L-ornithine from L-glutamate: step 2/4. Functionally, catalyzes the ATP-dependent phosphorylation of N-acetyl-L-glutamate. This chain is Acetylglutamate kinase, found in Syntrophus aciditrophicus (strain SB).